A 173-amino-acid chain; its full sequence is Adenine phosphoribosyltransferase (173 aa).

It belongs to the purine/pyrimidine phosphoribosyltransferase family. In terms of assembly, homodimer.

The protein localises to the cytoplasm. It catalyses the reaction AMP + diphosphate = 5-phospho-alpha-D-ribose 1-diphosphate + adenine. Its pathway is purine metabolism; AMP biosynthesis via salvage pathway; AMP from adenine: step 1/1. Functionally, catalyzes a salvage reaction resulting in the formation of AMP, that is energically less costly than de novo synthesis. The polypeptide is Adenine phosphoribosyltransferase (Methanococcus vannielii (strain ATCC 35089 / DSM 1224 / JCM 13029 / OCM 148 / SB)).